The primary structure comprises 907 residues: Anaphase-promoting complex subunit 2 (907 aa).

Disordered stretches follow at residues 203–228 and 790–838; these read NNSK…EEES and NKEK…AKEK. 2 stretches are compositionally biased toward acidic residues: residues 214-226 and 804-830; these read QQEE…ENEE and ENDD…EEEE.

This sequence belongs to the cullin family. In terms of assembly, the APC/C is composed of at least 13 subunits that stay tightly associated throughout the cell cycle: anapc1, anapc2, anapc3, anapc4, anapc5, anapc6, anapc7, anapc8, anapc10, anapc11, cdc20, cdc26 and cdh1.

It is found in the nucleus. It functions in the pathway protein modification; protein ubiquitination. Functionally, component of the anaphase promoting complex/cyclosome (APC/C), a cell cycle-regulated E3 ubiquitin-protein ligase complex that controls progression through mitosis and the G1 phase of the cell cycle. The polypeptide is Anaphase-promoting complex subunit 2 (anapc2) (Dictyostelium discoideum (Social amoeba)).